The following is a 194-amino-acid chain: Threonylcarbamoyl-AMP synthase (194 aa).

Residues 11-194 enclose the YrdC-like domain; it reads FRNLMKIINA…GINYKIIRKG (184 aa).

Belongs to the SUA5 family. TsaC subfamily.

The protein resides in the cytoplasm. It catalyses the reaction L-threonine + hydrogencarbonate + ATP = L-threonylcarbamoyladenylate + diphosphate + H2O. In terms of biological role, required for the formation of a threonylcarbamoyl group on adenosine at position 37 (t(6)A37) in tRNAs that read codons beginning with adenine. Catalyzes the conversion of L-threonine, HCO(3)(-)/CO(2) and ATP to give threonylcarbamoyl-AMP (TC-AMP) as the acyladenylate intermediate, with the release of diphosphate. This Wigglesworthia glossinidia brevipalpis protein is Threonylcarbamoyl-AMP synthase.